A 1674-amino-acid chain; its full sequence is E3 ubiquitin-protein ligase SHPRH (1674 aa).

The interval 1–26 is disordered; it reads MSSRRKRAPPMKVDEERQQQLHWNMH. Over residues 12–26 the composition is skewed to basic and acidic residues; the sequence is KVDEERQQQLHWNMH. A phosphoserine mark is found at serine 259 and serine 261. The region spanning 302–384 is the Helicase ATP-binding; first part domain; that stretch reads YQREAVNWML…TVEVLALILT (83 aa). Residue 368–375 participates in ATP binding; the sequence is DEMGLGKT. An H15 domain is found at 433–507; it reads HCPPTRVMIL…GFSGTFTLGK (75 aa). The interval 524-548 is disordered; the sequence is SPRKIEKELRKSVNKDADSEYLPSN. A compositionally biased stretch (basic and acidic residues) spans 526 to 541; sequence RKIEKELRKSVNKDAD. Residue serine 626 is modified to Phosphoserine. Residues 649–700 form a PHD-type zinc finger; that stretch reads RFECICGEFDQIGHKPRVQCLKCHLWQHAKCVNYEEKNLKVKPFYCPHCLVA. The Helicase ATP-binding; second part domain occupies 701–859; it reads MEPVSTRATL…FGLVVFLGIE (159 aa). The DEAQ box motif lies at 810–813; it reads DEAQ. The RING-type zinc finger occupies 1423-1470; the sequence is CPICARQLGKQWAVLTCGHCFCNECTSIIIEQYSVGSHRSSIKCAICR. The Helicase C-terminal domain maps to 1505–1663; the sequence is AVVRTLMKIQ…ASVLTVAGLA (159 aa).

It belongs to the SNF2/RAD54 helicase family. Homodimer. Interacts with HLTF, PCNA, UBE2N and RAD18. Broadly expressed (at protein level).

It carries out the reaction S-ubiquitinyl-[E2 ubiquitin-conjugating enzyme]-L-cysteine + [acceptor protein]-L-lysine = [E2 ubiquitin-conjugating enzyme]-L-cysteine + N(6)-ubiquitinyl-[acceptor protein]-L-lysine.. It functions in the pathway protein modification; protein ubiquitination. E3 ubiquitin-protein ligase involved in DNA repair. Upon genotoxic stress, accepts ubiquitin from the UBE2N-UBE2V2 E2 complex and transfers it to 'Lys-164' of PCNA which had been monoubiquitinated by UBE2A/B-RAD18, promoting the formation of non-canonical poly-ubiquitin chains linked through 'Lys-63'. The chain is E3 ubiquitin-protein ligase SHPRH (Shprh) from Mus musculus (Mouse).